The sequence spans 264 residues: Phosphoinositide-3-kinase-interacting protein 1 (264 aa).

Residues 1–21 (MLLAWVHTFLLSNMLLAEAYG) form the signal peptide. Residues 22-170 (SGGCFWDNGH…SKEKKDLGTL (149 aa)) are Extracellular-facing. The 78-residue stretch at 24–101 (GCFWDNGHLY…EKRPCEDVSC (78 aa)) folds into the Kringle domain. 3 cysteine pairs are disulfide-bonded: Cys25/Cys101, Cys46/Cys82, and Cys70/Cys96. The segment at 94 to 129 (RPCEDVSCPETTSQAPPPSSAMELEEKSGAPGDKEA) is disordered. Over residues 117 to 129 (LEEKSGAPGDKEA) the composition is skewed to basic and acidic residues. Residues 171–191 (GYVLGITMMVIILAIGAGIIV) form a helical membrane-spanning segment. Residues 192 to 264 (GYTYKRGKDL…LTGQAGTPGA (73 aa)) lie on the Cytoplasmic side of the membrane.

It is found in the cell membrane. Its function is as follows. Negative regulator of hepatic phosphatidylinositol 3-kinase (PI3K) activity. This is Phosphoinositide-3-kinase-interacting protein 1 (Pik3ip1) from Mus musculus (Mouse).